We begin with the raw amino-acid sequence, 885 residues long: DNA mismatch repair protein MutS (885 aa).

The disordered stretch occupies residues methionine 1 to arginine 67. Basic and acidic residues predominate over residues serine 26–proline 36. Glycine 691 to serine 698 is a binding site for ATP.

The protein belongs to the DNA mismatch repair MutS family.

In terms of biological role, this protein is involved in the repair of mismatches in DNA. It is possible that it carries out the mismatch recognition step. This protein has a weak ATPase activity. The protein is DNA mismatch repair protein MutS of Synechococcus sp. (strain RCC307).